The chain runs to 167 residues: U-scoloptoxin(08)-Er5b (167 aa).

Residues 1–22 form the signal peptide; it reads MKTNCEFPLLCLLIVLVANVEG. Positions 23–94 are excised as a propeptide; it reads EVEDTGLKMV…KRLWRNWERR (72 aa). 3 RLWRNWE repeats span residues 34-40, 61-67, and 86-92; these read RLWRNWE. Pyrrolidone carboxylic acid is present on Gln-95. An RLWRNWE 4; approximate repeat occupies 107–113; the sequence is ELWRNWE. Residues 112 to 118 constitute a propeptide that is removed on maturation; it reads WEDLKRR. Gln-119 carries the pyrrolidone carboxylic acid modification. The stretch at 134–140 is one RLWRNWE 5 repeat; it reads RLWRNWE. The propeptide occupies 139 to 167; the sequence is WEDNHATLRKRSADSLSRQKRLGKERGKE. Residues 147–167 are disordered; the sequence is RKRSADSLSRQKRLGKERGKE.

Belongs to the scoloptoxin-08 family. As to expression, expressed by the venom gland.

The protein localises to the secreted. This is U-scoloptoxin(08)-Er5b from Ethmostigmus rubripes (Giant centipede).